The chain runs to 90 residues: Large ribosomal subunit protein uL23c (90 aa).

This sequence belongs to the universal ribosomal protein uL23 family. In terms of assembly, part of the 50S ribosomal subunit.

The protein resides in the plastid. It is found in the chloroplast. Binds to 23S rRNA. This Oltmannsiellopsis viridis (Marine flagellate) protein is Large ribosomal subunit protein uL23c (rpl23).